A 465-amino-acid chain; its full sequence is Iron-sulfur cluster assembly SufBD family protein SE_0610 (465 aa).

The protein belongs to the iron-sulfur cluster assembly SufBD family.

The sequence is that of Iron-sulfur cluster assembly SufBD family protein SE_0610 from Staphylococcus epidermidis (strain ATCC 12228 / FDA PCI 1200).